The chain runs to 619 residues: DNA mismatch repair protein MutL (619 aa).

Residues 364 to 375 (EPASAREPAAPR) are compositionally biased toward low complexity. The tract at residues 364 to 399 (EPASAREPAAPRYSTSSGATGGRQPAASWPHAQPGY) is disordered.

Belongs to the DNA mismatch repair MutL/HexB family.

In terms of biological role, this protein is involved in the repair of mismatches in DNA. It is required for dam-dependent methyl-directed DNA mismatch repair. May act as a 'molecular matchmaker', a protein that promotes the formation of a stable complex between two or more DNA-binding proteins in an ATP-dependent manner without itself being part of a final effector complex. This Citrobacter koseri (strain ATCC BAA-895 / CDC 4225-83 / SGSC4696) protein is DNA mismatch repair protein MutL.